The chain runs to 406 residues: Imidazolonepropionase (406 aa).

Positions 65 and 67 each coordinate Fe(3+). Zn(2+) is bound by residues His-65 and His-67. Residues Arg-74, Tyr-137, and His-170 each contribute to the 4-imidazolone-5-propanoate site. Tyr-137 is a binding site for N-formimidoyl-L-glutamate. His-235 serves as a coordination point for Fe(3+). A Zn(2+)-binding site is contributed by His-235. Gln-238 contributes to the 4-imidazolone-5-propanoate binding site. Residue Asp-310 participates in Fe(3+) binding. A Zn(2+)-binding site is contributed by Asp-310. 2 residues coordinate N-formimidoyl-L-glutamate: Asn-312 and Gly-314. Position 315 (Thr-315) interacts with 4-imidazolone-5-propanoate.

This sequence belongs to the metallo-dependent hydrolases superfamily. HutI family. It depends on Zn(2+) as a cofactor. The cofactor is Fe(3+).

The protein localises to the cytoplasm. The enzyme catalyses 4-imidazolone-5-propanoate + H2O = N-formimidoyl-L-glutamate. Its pathway is amino-acid degradation; L-histidine degradation into L-glutamate; N-formimidoyl-L-glutamate from L-histidine: step 3/3. In terms of biological role, catalyzes the hydrolytic cleavage of the carbon-nitrogen bond in imidazolone-5-propanoate to yield N-formimidoyl-L-glutamate. It is the third step in the universal histidine degradation pathway. In Vibrio vulnificus (strain CMCP6), this protein is Imidazolonepropionase.